The primary structure comprises 435 residues: Cytidine monophosphate-N-acetylneuraminic acid hydroxylase (435 aa).

This sequence belongs to the CMP-Neu5Ac hydroxylase family. [2Fe-2S] cluster serves as cofactor.

The protein localises to the cytoplasm. The catalysed reaction is CMP-N-acetyl-beta-neuraminate + 2 Fe(II)-[cytochrome b5] + O2 + 2 H(+) = CMP-N-glycoloyl-beta-neuraminate + 2 Fe(III)-[cytochrome b5] + H2O. The protein operates within amino-sugar metabolism; N-acetylneuraminate metabolism. Sialic acids are components of carbohydrate chains of glycoconjugates and are involved in cell-cell recognition and cell-pathogen interactions. Catalyzes the conversion of CMP-N-acetylneuraminic acid (CMP-Neu5Ac) into its hydroxylated derivative CMP-N-glycolylneuraminic acid (CMP-Neu5Gc), a sialic acid abundantly expressed at the surface of many cells. The protein is Cytidine monophosphate-N-acetylneuraminic acid hydroxylase of Sus scrofa (Pig).